The chain runs to 122 residues: Large ribosomal subunit protein uL14 (122 aa).

This sequence belongs to the universal ribosomal protein uL14 family. Part of the 50S ribosomal subunit. Forms a cluster with proteins L3 and L19. In the 70S ribosome, L14 and L19 interact and together make contacts with the 16S rRNA in bridges B5 and B8.

Its function is as follows. Binds to 23S rRNA. Forms part of two intersubunit bridges in the 70S ribosome. In Xanthomonas oryzae pv. oryzae (strain MAFF 311018), this protein is Large ribosomal subunit protein uL14.